The primary structure comprises 48 residues: Disintegrin leucogastin-A (48 aa).

Positions D1–P47 constitute a Disintegrin domain. 4 disulfide bridges follow: C2/C11, C7/C32, C8/C37, and C20/C39. The short motif at R24–D26 is the Cell attachment site element.

This sequence belongs to the venom metalloproteinase (M12B) family. P-II subfamily. P-IIa sub-subfamily. In terms of assembly, monomer (disintegrin). As to expression, expressed by the venom gland.

The protein resides in the secreted. In terms of biological role, inhibits ADP-induced human platelet aggregation. The polypeptide is Disintegrin leucogastin-A (Echis leucogaster (Roman's saw-scaled viper)).